Consider the following 346-residue polypeptide: Protein MelA (346 aa).

2 VOC domains span residues 12 to 141 and 155 to 305; these read GIEF…DFEA and EVDH…IFTK. Residues His158, His237, and Glu314 each coordinate Fe cation.

This sequence belongs to the 4HPPD family. Fe cation is required as a cofactor.

Its subcellular location is the cytoplasm. It participates in pigment biosynthesis; melanin biosynthesis. This is Protein MelA (melA) from Shewanella colwelliana (Alteromonas colwelliana).